A 419-amino-acid chain; its full sequence is Serine hydroxymethyltransferase (419 aa).

(6S)-5,6,7,8-tetrahydrofolate contacts are provided by residues Leu-118 and Gly-122 to Leu-124. Lys-226 is modified (N6-(pyridoxal phosphate)lysine). Glu-242 serves as a coordination point for (6S)-5,6,7,8-tetrahydrofolate.

It belongs to the SHMT family. As to quaternary structure, homodimer. Requires pyridoxal 5'-phosphate as cofactor.

The protein resides in the cytoplasm. It carries out the reaction (6R)-5,10-methylene-5,6,7,8-tetrahydrofolate + glycine + H2O = (6S)-5,6,7,8-tetrahydrofolate + L-serine. The protein operates within one-carbon metabolism; tetrahydrofolate interconversion. It functions in the pathway amino-acid biosynthesis; glycine biosynthesis; glycine from L-serine: step 1/1. In terms of biological role, catalyzes the reversible interconversion of serine and glycine with tetrahydrofolate (THF) serving as the one-carbon carrier. This reaction serves as the major source of one-carbon groups required for the biosynthesis of purines, thymidylate, methionine, and other important biomolecules. Also exhibits THF-independent aldolase activity toward beta-hydroxyamino acids, producing glycine and aldehydes, via a retro-aldol mechanism. This chain is Serine hydroxymethyltransferase, found in Metamycoplasma arthritidis (strain 158L3-1) (Mycoplasma arthritidis).